A 646-amino-acid chain; its full sequence is Probable lysosomal cobalamin transporter (646 aa).

5 consecutive transmembrane segments (helical) span residues 11 to 31, 42 to 62, 102 to 122, 149 to 169, and 193 to 213; these read LIWVAYGVAVALVLLVSVITT, IAVSIVSIISLTALLATVFLL, TLYTLDALLCLIVIPFTYFWF, LGFVFLVVILFLIGFFVPAAG, and ALTFGVGLLITLGTLLYILYT. N-linked (GlcNAc...) asparagine glycosylation is present at asparagine 297. 2 helical membrane-spanning segments follow: residues 317 to 337 and 380 to 400; these read LLGGIFLLLLAILIWVSMLIT and ILMALLVLLFFSSSITGLATI. Disordered regions lie at residues 459–588 and 603–623; these read QPAA…PPRR and VGRARGVKLNGGAATENDKKE. 2 stretches are compositionally biased toward low complexity: residues 460-490 and 517-543; these read PAAATRASSPTAASTATWCAPAPRPSASPAA and PSTSGPSSSSSPSSSSSSSPASSRTPR. Asparagine 545 carries an N-linked (GlcNAc...) asparagine glycan. The span at 565-582 shows a compositional bias: low complexity; the sequence is APAAALARPGAISPAAPR. N-linked (GlcNAc...) asparagine glycosylation occurs at asparagine 626.

Belongs to the LIMR family. LMBRD1 subfamily.

The protein resides in the lysosome membrane. In terms of biological role, probable lysosomal cobalamin transporter. Required to export cobalamin from lysosomes allowing its conversion to cofactors. The polypeptide is Probable lysosomal cobalamin transporter (Chaetomium globosum (strain ATCC 6205 / CBS 148.51 / DSM 1962 / NBRC 6347 / NRRL 1970) (Soil fungus)).